A 343-amino-acid polypeptide reads, in one-letter code: Alpha-tocopherol transfer protein-like (343 aa).

The disordered stretch occupies residues 1 to 29; the sequence is MSEESDSLRTSPSVASLSENELPLPPPDP. The segment covering 8–19 has biased composition (polar residues); that stretch reads LRTSPSVASLSE. The region spanning 118 to 283 is the CRAL-TRIO domain; that stretch reads RPSALKDVLN…EYGGTAGELD (166 aa).

Its function is as follows. May act as a protein that binds a hydrophobic ligand. This Mus musculus (Mouse) protein is Alpha-tocopherol transfer protein-like (Ttpal).